The primary structure comprises 121 residues: UPF0231 protein ESA_03214 (121 aa).

Belongs to the UPF0231 family.

The sequence is that of UPF0231 protein ESA_03214 from Cronobacter sakazakii (strain ATCC BAA-894) (Enterobacter sakazakii).